We begin with the raw amino-acid sequence, 186 residues long: dCTP deaminase (186 aa).

Lysine 107 to arginine 112 serves as a coordination point for dCTP. The active-site Proton donor/acceptor is glutamate 133. DCTP-binding residues include glutamine 152, tyrosine 166, and glutamine 176.

The protein belongs to the dCTP deaminase family. Homotrimer.

It catalyses the reaction dCTP + H2O + H(+) = dUTP + NH4(+). The protein operates within pyrimidine metabolism; dUMP biosynthesis; dUMP from dCTP (dUTP route): step 1/2. Catalyzes the deamination of dCTP to dUTP. The chain is dCTP deaminase from Campylobacter jejuni (strain RM1221).